Here is a 133-residue protein sequence, read N- to C-terminus: DNA-binding protein inhibitor ID-2-A (133 aa).

Residues 23 to 75 (ARSKTPVDDPMSLLYNMNDCYSKLKELVPSIPQNKKVSKMEILQHVIDYILDL) form the bHLH domain. The Nuclear export signal signature appears at 106 to 115 (LNTDISILSL).

Heterodimer with other HLH proteins. In the embryo, expressed in a range of tissues, with primary expression in the developing pronephros; expressed in the pronephric anlage, and by the swimming tadpole stages expressed robustly in the pronephric tubules and weakly in the pronephric duct. Expressed in the secondary heart field. In the developing nervous system, expressed in the neural crest and in the neural folds during neurula stages, and at stage 20 in the neural tube, ventral mesoderm and mid-hindbrain boundary. By early tailbud stages, expressed in the neural tube, somites and branchial arches. In tadpoles (stage 37/38), expressed in the heart, eye, otic vesicle, somites and branchial arches. Also expressed in migrating muscle cells. Expressed at a low level in limbs, with expression decreasing as limbs develop, but expressed at a high level in blastemas (regenerated limbs), where expression is localized primarily to the blastemal epidermis. Widely expressed in adults with highest expression in the spleen, skin, intestine and brain, and at a much lower level in testis and heart.

It localises to the cytoplasm. Its subcellular location is the nucleus. In terms of biological role, transcriptional regulator (lacking a basic DNA binding domain) which negatively regulates the basic helix-loop-helix (bHLH) transcription factors by forming heterodimers and inhibiting their DNA binding and transcriptional activity. Inhibits the activity of both neurogenic (neurod1/neuroD) and myogenic (myod1/myoD) bHLH factors. May play a role in the regulation of the circadian clock. This Xenopus laevis (African clawed frog) protein is DNA-binding protein inhibitor ID-2-A (id2-a).